A 100-amino-acid chain; its full sequence is Aspartyl/glutamyl-tRNA(Asn/Gln) amidotransferase subunit C (100 aa).

Belongs to the GatC family. As to quaternary structure, heterotrimer of A, B and C subunits.

The catalysed reaction is L-glutamyl-tRNA(Gln) + L-glutamine + ATP + H2O = L-glutaminyl-tRNA(Gln) + L-glutamate + ADP + phosphate + H(+). The enzyme catalyses L-aspartyl-tRNA(Asn) + L-glutamine + ATP + H2O = L-asparaginyl-tRNA(Asn) + L-glutamate + ADP + phosphate + 2 H(+). In terms of biological role, allows the formation of correctly charged Asn-tRNA(Asn) or Gln-tRNA(Gln) through the transamidation of misacylated Asp-tRNA(Asn) or Glu-tRNA(Gln) in organisms which lack either or both of asparaginyl-tRNA or glutaminyl-tRNA synthetases. The reaction takes place in the presence of glutamine and ATP through an activated phospho-Asp-tRNA(Asn) or phospho-Glu-tRNA(Gln). The protein is Aspartyl/glutamyl-tRNA(Asn/Gln) amidotransferase subunit C of Streptococcus sanguinis (strain SK36).